A 52-amino-acid chain; its full sequence is Stable plasmid inheritance protein (52 aa).

A helical transmembrane segment spans residues 6–26 (SSLVWCVLIVCLTLLIFTYLT).

The protein belongs to the Hok/Gef family.

It localises to the cell inner membrane. In terms of biological role, toxic component of a type I toxin-antitoxin (TA) system. Part of the plasmid maintenance system, encodes a toxic protein that collapses the transmembrane potential and arrests respiration. When the adjacent non-translated flmB (sok) gene is disrupted FlmA no longer functions in plasmid maintenance (i.e. FlmB probably encodes an antisense antitoxin RNA). Translation of FlmA may be coupled to the upstream flmC gene. The polypeptide is Stable plasmid inheritance protein (flmA) (Escherichia coli O157:H7).